Consider the following 446-residue polypeptide: Phosphoglucosamine mutase (446 aa).

Ser100 (phosphoserine intermediate) is an active-site residue. Positions 100, 239, 241, and 243 each coordinate Mg(2+). Residue Ser100 is modified to Phosphoserine.

Belongs to the phosphohexose mutase family. Requires Mg(2+) as cofactor. In terms of processing, activated by phosphorylation.

The catalysed reaction is alpha-D-glucosamine 1-phosphate = D-glucosamine 6-phosphate. In terms of biological role, catalyzes the conversion of glucosamine-6-phosphate to glucosamine-1-phosphate. The chain is Phosphoglucosamine mutase from Shouchella clausii (strain KSM-K16) (Alkalihalobacillus clausii).